The chain runs to 210 residues: Small ribosomal subunit protein uS7 (210 aa).

It belongs to the universal ribosomal protein uS7 family. In terms of assembly, component of the small ribosomal subunit. Part of the small subunit (SSU) processome, composed of more than 70 proteins and the RNA chaperone small nucleolar RNA (snoRNA) U3.

Its subcellular location is the cytoplasm. It is found in the nucleus. The protein localises to the nucleolus. Component of the small ribosomal subunit. The ribosome is a large ribonucleoprotein complex responsible for the synthesis of proteins in the cell. Part of the small subunit (SSU) processome, first precursor of the small eukaryotic ribosomal subunit. During the assembly of the SSU processome in the nucleolus, many ribosome biogenesis factors, an RNA chaperone and ribosomal proteins associate with the nascent pre-rRNA and work in concert to generate RNA folding, modifications, rearrangements and cleavage as well as targeted degradation of pre-ribosomal RNA by the RNA exosome. In Caenorhabditis elegans, this protein is Small ribosomal subunit protein uS7 (rps-5).